The following is a 507-amino-acid chain: RNA-splicing ligase RtcB homolog (507 aa).

Residues D121, C124, H229, H261, and H355 each contribute to the Mn(2+) site. 228–232 (NHYGE) contacts GMP. Residues 355–356 (HN), 404–407 (GGTM), S411, 430–433 (HGSG), and K506 contribute to the GMP site. Residue H430 is the GMP-histidine intermediate of the active site.

This sequence belongs to the RtcB family. In terms of assembly, catalytic component of the tRNA-splicing ligase complex. Mn(2+) serves as cofactor.

It catalyses the reaction a 3'-end 3'-phospho-ribonucleotide-RNA + a 5'-end dephospho-ribonucleoside-RNA + GTP = a ribonucleotidyl-ribonucleotide-RNA + GMP + diphosphate. The enzyme catalyses a 3'-end 2',3'-cyclophospho-ribonucleotide-RNA + a 5'-end dephospho-ribonucleoside-RNA + GTP + H2O = a ribonucleotidyl-ribonucleotide-RNA + GMP + diphosphate + H(+). In terms of biological role, catalytic subunit of the tRNA-splicing ligase complex that acts by directly joining spliced tRNA halves to mature-sized tRNAs by incorporating the precursor-derived splice junction phosphate into the mature tRNA as a canonical 3',5'-phosphodiester. May act as an RNA ligase with broad substrate specificity, and may function toward other RNAs. This is RNA-splicing ligase RtcB homolog from Theileria parva (East coast fever infection agent).